Consider the following 1192-residue polypeptide: Coiled-coil domain-containing protein 40 (1192 aa).

Disordered regions lie at residues 1-78, 126-153, 173-196, 211-246, and 261-289; these read MMDA…PGMD, KAKH…LEVS, SSPE…NVSA, EPIE…YQRD, and GSLT…STPR. The segment covering 27–45 has biased composition (acidic residues); sequence PETEVEFIGETAPDTDVEF. Pro residues predominate over residues 215-228; it reads PTEPPEPAEPPKPA. A compositionally biased stretch (acidic residues) spans 267–279; the sequence is DTDDLPLETDEPP. Serine 306 carries the post-translational modification Phosphoserine. 7 coiled-coil regions span residues 308–369, 425–451, 581–649, 733–768, 830–871, 919–972, and 1044–1118; these read EALL…ATKQ, KTCQ…ALHL, DSEI…MLNK, NTNC…EIAR, LQQE…KIAH, LRTL…EMRS, and QQRE…IVTL.

The protein belongs to the CCDC40 family. As to expression, specifically expressed in the embryonic node and midline.

Its subcellular location is the cytoplasm. It localises to the cell projection. The protein localises to the cilium. In terms of biological role, required for assembly of dynein regulatory complex (DRC) and inner dynein arm (IDA) complexes, which are responsible for ciliary beat regulation, thereby playing a central role in motility in cilia and flagella. Probably acts together with CCDC39 to form a molecular ruler that determines the 96 nanometer (nm) repeat length and arrangements of components in cilia and flagella. Not required for outer dynein arm complexes assembly. Required for axonemal recruitment of CCDC39. In Mus musculus (Mouse), this protein is Coiled-coil domain-containing protein 40.